Consider the following 315-residue polypeptide: Protein OPG185 (315 aa).

A signal peptide spans 1 to 16 (MTRLPILLLLISLVYA). In terms of domain architecture, Ig-like V-type spans 17-121 (TPFPQTSKKI…NDTDKVDYEE (105 aa)). Topologically, residues 17 to 279 (TPFPQTSKKI…SNYKTKDFVE (263 aa)) are virion surface. C34 and C103 form a disulfide bridge. N-linked (GlcNAc...) asparagine; by host glycosylation is found at N37, N69, N112, and N161. A compositionally biased stretch (polar residues) spans 191–202 (SINTVSASSGES). The interval 191-213 (SINTVSASSGESTTDETPEPITD) is disordered. A glycan (N-linked (GlcNAc...) asparagine; by host) is linked at N254. A helical membrane pass occupies residues 280–303 (IFGITALIILSAVAIFCITYYIYN). The Intravirion segment spans residues 304-315 (KRSRKYKTENKV).

The protein belongs to the orthopoxvirus OPG185 family. As to quaternary structure, heterodimerizes with OPG040. The heterodimer OPG185-OPG040 interacts with components of the entry fusion complex OPG143 and OPG094. Heterodimer with C3/VPC protein; disulfide-linked. Post-translationally, glycosylated; contains phosphate and sulfate-substituted glycans. O-glycosylation is required for hemagglutination and hemadsorption activities of infected cell membranes.

It is found in the virion membrane. The protein resides in the host membrane. In terms of biological role, prevents cell to cell fusion by interacting with and directing the viral OPG040 protein on the host plasma membrane. The OPG185-OPG040 complex associates with components of the entry fusion complex (EFC) presumably to avoid superinfection and syncytium formation. Via its interaction with C3/VCP protein, protects the infected cell and probably also the extracellular enveloped virus from complement attack. This chain is Protein OPG185 (OPG185), found in Homo sapiens (Human).